Consider the following 124-residue polypeptide: Small ribosomal subunit protein uS12 (124 aa).

Asp89 is modified (3-methylthioaspartic acid).

The protein belongs to the universal ribosomal protein uS12 family. In terms of assembly, part of the 30S ribosomal subunit. Contacts proteins S8 and S17. May interact with IF1 in the 30S initiation complex.

Its function is as follows. With S4 and S5 plays an important role in translational accuracy. Functionally, interacts with and stabilizes bases of the 16S rRNA that are involved in tRNA selection in the A site and with the mRNA backbone. Located at the interface of the 30S and 50S subunits, it traverses the body of the 30S subunit contacting proteins on the other side and probably holding the rRNA structure together. The combined cluster of proteins S8, S12 and S17 appears to hold together the shoulder and platform of the 30S subunit. The sequence is that of Small ribosomal subunit protein uS12 from Shewanella denitrificans (strain OS217 / ATCC BAA-1090 / DSM 15013).